The following is a 175-amino-acid chain: Myosin regulatory light chain 2, atrial isoform (175 aa).

At Ala-2 the chain carries N-acetylalanine. Phosphoserine is present on residues Ser-22 and Ser-23. 3 EF-hand domains span residues 32–67, 102–137, and 138–173; these read AQIQEFKEAFSCIDQNRDGIICKADLRETYSQLGKV, DPEEAILSAFRMFDPSGKGVVNKDEFKQLLLTQADK, and FSPAEVEQMFALTPMDLAGNIDYKSLCYIITHGDEK. Ca(2+) is bound by residues Asp-45, Asn-47, Asp-49, and Asp-56.

In terms of assembly, myosin is a hexamer of 2 heavy chains and 4 light chains. As to expression, predominantly expressed in adult atrial muscle.

This is Myosin regulatory light chain 2, atrial isoform (MYL7) from Homo sapiens (Human).